A 72-amino-acid polypeptide reads, in one-letter code: Translation initiation factor IF-1 2 (72 aa).

In terms of domain architecture, S1-like spans 1–72 (MSKDDVIEVE…TRGRIVYRYK (72 aa)).

This sequence belongs to the IF-1 family. As to quaternary structure, component of the 30S ribosomal translation pre-initiation complex which assembles on the 30S ribosome in the order IF-2 and IF-3, IF-1 and N-formylmethionyl-tRNA(fMet); mRNA recruitment can occur at any time during PIC assembly.

Its subcellular location is the cytoplasm. Its function is as follows. One of the essential components for the initiation of protein synthesis. Stabilizes the binding of IF-2 and IF-3 on the 30S subunit to which N-formylmethionyl-tRNA(fMet) subsequently binds. Helps modulate mRNA selection, yielding the 30S pre-initiation complex (PIC). Upon addition of the 50S ribosomal subunit IF-1, IF-2 and IF-3 are released leaving the mature 70S translation initiation complex. This is Translation initiation factor IF-1 2 from Symbiobacterium thermophilum (strain DSM 24528 / JCM 14929 / IAM 14863 / T).